Reading from the N-terminus, the 365-residue chain is Aminomethyltransferase (365 aa).

Belongs to the GcvT family. As to quaternary structure, the glycine cleavage system is composed of four proteins: P, T, L and H.

The catalysed reaction is N(6)-[(R)-S(8)-aminomethyldihydrolipoyl]-L-lysyl-[protein] + (6S)-5,6,7,8-tetrahydrofolate = N(6)-[(R)-dihydrolipoyl]-L-lysyl-[protein] + (6R)-5,10-methylene-5,6,7,8-tetrahydrofolate + NH4(+). In terms of biological role, the glycine cleavage system catalyzes the degradation of glycine. In Yersinia pseudotuberculosis serotype O:3 (strain YPIII), this protein is Aminomethyltransferase.